The sequence spans 158 residues: 2-C-methyl-D-erythritol 2,4-cyclodiphosphate synthase (158 aa).

A divalent metal cation is bound by residues aspartate 9 and histidine 11. Residues 9-11 and 35-36 each bind 4-CDP-2-C-methyl-D-erythritol 2-phosphate; these read DVH and HS. Histidine 43 is an a divalent metal cation binding site. 4-CDP-2-C-methyl-D-erythritol 2-phosphate is bound by residues 57-59, 62-66, 133-136, phenylalanine 140, and arginine 143; these read DIG, FPDTD, and TTSE.

Belongs to the IspF family. Homotrimer. A divalent metal cation serves as cofactor.

It carries out the reaction 4-CDP-2-C-methyl-D-erythritol 2-phosphate = 2-C-methyl-D-erythritol 2,4-cyclic diphosphate + CMP. It participates in isoprenoid biosynthesis; isopentenyl diphosphate biosynthesis via DXP pathway; isopentenyl diphosphate from 1-deoxy-D-xylulose 5-phosphate: step 4/6. Its function is as follows. Involved in the biosynthesis of isopentenyl diphosphate (IPP) and dimethylallyl diphosphate (DMAPP), two major building blocks of isoprenoid compounds. Catalyzes the conversion of 4-diphosphocytidyl-2-C-methyl-D-erythritol 2-phosphate (CDP-ME2P) to 2-C-methyl-D-erythritol 2,4-cyclodiphosphate (ME-CPP) with a corresponding release of cytidine 5-monophosphate (CMP). This Pasteurella multocida (strain Pm70) protein is 2-C-methyl-D-erythritol 2,4-cyclodiphosphate synthase.